Reading from the N-terminus, the 303-residue chain is Glycine--tRNA ligase alpha subunit (303 aa).

This sequence belongs to the class-II aminoacyl-tRNA synthetase family. As to quaternary structure, tetramer of two alpha and two beta subunits.

The protein resides in the cytoplasm. It carries out the reaction tRNA(Gly) + glycine + ATP = glycyl-tRNA(Gly) + AMP + diphosphate. The protein is Glycine--tRNA ligase alpha subunit (glyQ) of Helicobacter pylori (strain ATCC 700392 / 26695) (Campylobacter pylori).